The sequence spans 213 residues: MAQRQKPMALRPAARILFLPPLNRPSPFNPWLARLLPPPPPGKLTKLTPGSSKILSSAPLVSFPSRLETPQVKYCLIWPSGQGLTPTLPTSQPCTPAGLGTWRFSWSSPAMPLLLARWLLPLYHPIFPRGHSLLPRSHASHMSCVMCAPWSPFNSLFLMCVESFGMLPRIKRNLCAWFACCTRHSAQTARVMSLLWSLAAFFLSRRLISILST.

Its subcellular location is the host mitochondrion. In terms of biological role, plays a role in antagonizing the host innate immune response. This chain is Virulence factor 1, found in Norovirus (isolate Mouse/NoV/United States/MNV1/2002/GV) (MNV-1).